The primary structure comprises 214 residues: MKAFTQHTGLVAPLDRANVDTDQIIPKQFLKSIKRTGFGPNLFDEWRYLDVGQPYQDNSKRPLNQEFVLNHERYQGASVLLARENFGCGSSREHAPWALDEYGFRSVIAPSFADIFFNNSFKNGLLPIILSDEEVEELFKQVEANPGYQLTIDLQAQAVTRPDGKVLHFEIDAFRKHCLLNGLDDIGLTLQDGEAIKAFEGKHRAAQPWLFRDA.

Belongs to the LeuD family. LeuD type 1 subfamily. In terms of assembly, heterodimer of LeuC and LeuD.

It carries out the reaction (2R,3S)-3-isopropylmalate = (2S)-2-isopropylmalate. It participates in amino-acid biosynthesis; L-leucine biosynthesis; L-leucine from 3-methyl-2-oxobutanoate: step 2/4. Catalyzes the isomerization between 2-isopropylmalate and 3-isopropylmalate, via the formation of 2-isopropylmaleate. In Pseudomonas putida (strain W619), this protein is 3-isopropylmalate dehydratase small subunit.